The primary structure comprises 149 residues: UPF0260 protein Pfl01_1392 (149 aa).

Belongs to the UPF0260 family.

The polypeptide is UPF0260 protein Pfl01_1392 (Pseudomonas fluorescens (strain Pf0-1)).